Reading from the N-terminus, the 336-residue chain is MSFLSKNGAGILACLLISILSWYLGGFFPVIGAPVFAIFIGMLLHPFLSSYKQLDAGLTFSSKKLLQYAVVLLGFGLNISQVFAVGQSSLPVILSTISIALIIAYLFQRFFALDTKLATLVGVGSSICGGSAIAATAPVIHAKEKEVAQAISVIFFFNVLAALIFPTLGTWLHLSNEGFALFAGTAVNDTSSVTAAASAWDSLYQSNTLESATIVKLTRTLAIIPITLFLSYWQSRQQENKQSLQLKKVFPLFILYFILASLLTTLLTSLGVSSSFFTPLKQLSKFLIVMAMSAIGLKTNLVAMVKSSGKSILLGAICWIAIILTTLGMQTLIGIF.

Helical transmembrane passes span 65-84 (LLQYAVVLLGFGLNISQVFA), 91-113 (PVILSTISIALIIAYLFQRFFAL), 118-140 (ATLVGVGSSICGGSAIAATAPVI), 153-175 (VIFFFNVLAALIFPTLGTWLHLS), 211-233 (SATIVKLTRTLAIIPITLFLSYW), 249-271 (VFPLFILYFILASLLTTLLTSLG), 286-305 (FLIVMAMSAIGLKTNLVAMV), and 312-334 (ILLGAICWIAIILTTLGMQTLIG).

It belongs to the UPF0324 family.

The protein localises to the cell membrane. The polypeptide is UPF0324 membrane protein spr0034 (Streptococcus pneumoniae (strain ATCC BAA-255 / R6)).